A 234-amino-acid polypeptide reads, in one-letter code: 1-(5-phosphoribosyl)-5-[(5-phosphoribosylamino)methylideneamino] imidazole-4-carboxamide isomerase (234 aa).

Asp-9 (proton acceptor) is an active-site residue. Asp-131 (proton donor) is an active-site residue.

Belongs to the HisA/HisF family.

Its subcellular location is the cytoplasm. It catalyses the reaction 1-(5-phospho-beta-D-ribosyl)-5-[(5-phospho-beta-D-ribosylamino)methylideneamino]imidazole-4-carboxamide = 5-[(5-phospho-1-deoxy-D-ribulos-1-ylimino)methylamino]-1-(5-phospho-beta-D-ribosyl)imidazole-4-carboxamide. The protein operates within amino-acid biosynthesis; L-histidine biosynthesis; L-histidine from 5-phospho-alpha-D-ribose 1-diphosphate: step 4/9. The polypeptide is 1-(5-phosphoribosyl)-5-[(5-phosphoribosylamino)methylideneamino] imidazole-4-carboxamide isomerase (Staphylococcus carnosus (strain TM300)).